Reading from the N-terminus, the 374-residue chain is MKAIHFGAGNIGRGFIGALLSKANYEVVFVDVNAQVIDRLNEQRSYTVLTADEDNEENVIHNVRGLNSRTQMEQVLAEIATADLVTTAVGPSVLPHLAHPIGQGLLQRNGAPIQVIACENAIGASSMLQEYTKASLSEEEWSKVDRVTGFPNATVDRIVPAQDHADPLTVSVEPFYEWVIETKSMKGEPPTIDGVTYVEDLTPYIERKLFTVNTGHAMVAYLGFQKGLMTIKEAISDQTIAEKTRQALAETKGLLVHKYNFSPEAHDEYIEKIFKRYNNPYLSDRVERVGRNPIRKLGYNERLVKPARQLLDLGHQPTALLAGIQAAFAFFVEDDQESMELQEKRQVQGLEQTVVEVTGLPAVHPLVQMIVGNN.

NAD(+) is bound at residue 3–14 (AIHFGAGNIGRG).

It belongs to the mannitol dehydrogenase family.

The catalysed reaction is D-mannitol 1-phosphate + NAD(+) = beta-D-fructose 6-phosphate + NADH + H(+). The sequence is that of Mannitol-1-phosphate 5-dehydrogenase from Halalkalibacterium halodurans (strain ATCC BAA-125 / DSM 18197 / FERM 7344 / JCM 9153 / C-125) (Bacillus halodurans).